A 338-amino-acid chain; its full sequence is Alanine racemase (338 aa).

The Proton acceptor; specific for D-alanine role is filled by lysine 33. Residue lysine 33 is modified to N6-(pyridoxal phosphate)lysine. Arginine 126 contributes to the substrate binding site. Tyrosine 236 (proton acceptor; specific for L-alanine) is an active-site residue. Methionine 284 is a substrate binding site.

This sequence belongs to the alanine racemase family. Pyridoxal 5'-phosphate is required as a cofactor.

The catalysed reaction is L-alanine = D-alanine. It participates in amino-acid biosynthesis; D-alanine biosynthesis; D-alanine from L-alanine: step 1/1. Catalyzes the interconversion of L-alanine and D-alanine. May also act on other amino acids. This chain is Alanine racemase (alr), found in Aquifex aeolicus (strain VF5).